The chain runs to 185 residues: Elongation factor P (185 aa).

Belongs to the elongation factor P family.

It is found in the cytoplasm. The protein operates within protein biosynthesis; polypeptide chain elongation. In terms of biological role, involved in peptide bond synthesis. Stimulates efficient translation and peptide-bond synthesis on native or reconstituted 70S ribosomes in vitro. Probably functions indirectly by altering the affinity of the ribosome for aminoacyl-tRNA, thus increasing their reactivity as acceptors for peptidyl transferase. The polypeptide is Elongation factor P (Azoarcus sp. (strain BH72)).